Reading from the N-terminus, the 524-residue chain is Putative ribose/galactose/methyl galactoside import ATP-binding protein 1 (524 aa).

2 ABC transporter domains span residues 35–271 (LEVR…VGRE) and 281–520 (VPIG…RIMD). 67-74 (GENGAGKS) provides a ligand contact to ATP.

This sequence belongs to the ABC transporter superfamily. Carbohydrate importer 2 (CUT2) (TC 3.A.1.2) family.

The protein resides in the cell inner membrane. The enzyme catalyses D-ribose(out) + ATP + H2O = D-ribose(in) + ADP + phosphate + H(+). It carries out the reaction D-galactose(out) + ATP + H2O = D-galactose(in) + ADP + phosphate + H(+). Part of an ABC transporter complex involved in carbohydrate import. Could be involved in ribose, galactose and/or methyl galactoside import. Responsible for energy coupling to the transport system. The chain is Putative ribose/galactose/methyl galactoside import ATP-binding protein 1 from Burkholderia cenocepacia (strain HI2424).